Reading from the N-terminus, the 71-residue chain is Small ribosomal subunit protein bS21 (71 aa).

Belongs to the bacterial ribosomal protein bS21 family.

The protein is Small ribosomal subunit protein bS21 of Shewanella amazonensis (strain ATCC BAA-1098 / SB2B).